The chain runs to 253 residues: 3-deoxy-manno-octulosonate cytidylyltransferase (253 aa).

This sequence belongs to the KdsB family.

It localises to the cytoplasm. The catalysed reaction is 3-deoxy-alpha-D-manno-oct-2-ulosonate + CTP = CMP-3-deoxy-beta-D-manno-octulosonate + diphosphate. It participates in nucleotide-sugar biosynthesis; CMP-3-deoxy-D-manno-octulosonate biosynthesis; CMP-3-deoxy-D-manno-octulosonate from 3-deoxy-D-manno-octulosonate and CTP: step 1/1. Its pathway is bacterial outer membrane biogenesis; lipopolysaccharide biosynthesis. In terms of biological role, activates KDO (a required 8-carbon sugar) for incorporation into bacterial lipopolysaccharide in Gram-negative bacteria. The protein is 3-deoxy-manno-octulosonate cytidylyltransferase of Acinetobacter baumannii (strain ATCC 17978 / DSM 105126 / CIP 53.77 / LMG 1025 / NCDC KC755 / 5377).